The primary structure comprises 422 residues: Histidine--tRNA ligase (422 aa).

It belongs to the class-II aminoacyl-tRNA synthetase family. In terms of assembly, homodimer.

Its subcellular location is the cytoplasm. The catalysed reaction is tRNA(His) + L-histidine + ATP = L-histidyl-tRNA(His) + AMP + diphosphate + H(+). In Alcanivorax borkumensis (strain ATCC 700651 / DSM 11573 / NCIMB 13689 / SK2), this protein is Histidine--tRNA ligase.